The following is a 556-amino-acid chain: Single-strand DNA-binding protein (556 aa).

Disordered stretches follow at residues M1–E95 and F527–L556. 2 stretches are compositionally biased toward polar residues: residues E10–F25 and V36–E51. Composition is skewed to basic and acidic residues over residues T52–A73 and D539–P548.

Interacts with host VIP2 that promotes T-DNA integration into the host genome. Forms a complex made of virE2 and host proteins VIP1 and VBF. Forms heterodimers with the chaperone protein virE1 that prevent virE2 anarchic homopolymerization. Interacts with A.thaliana VIP1 that mediates its translocation to the host nucleus. Forms a complex made of VirE2, host VIP1 and VIP2 and single-stranded DNA (ssDNA).

It localises to the secreted. The protein resides in the host nucleus. In terms of biological role, involved in DNA transformation; mediates the nuclear uptake of single-stranded DNA copies of the transferred DNA (T-DNA) element. Binds single-stranded but not double-stranded DNA regardless of nucleotide sequence composition. The protein is Single-strand DNA-binding protein (virE2) of Agrobacterium fabrum (strain C58 / ATCC 33970) (Agrobacterium tumefaciens (strain C58)).